The following is a 255-amino-acid chain: Sulfate transporter CysZ (255 aa).

A run of 4 helical transmembrane segments spans residues 26-46, 71-91, 150-170, and 211-231; these read LFVL…IYFA, LLWP…FTML, LFIL…WLLF, and IVYL…AAVA.

The protein belongs to the CysZ family.

It is found in the cell inner membrane. Its function is as follows. High affinity, high specificity proton-dependent sulfate transporter, which mediates sulfate uptake. Provides the sulfur source for the cysteine synthesis pathway. This Pseudomonas fluorescens (strain SBW25) protein is Sulfate transporter CysZ.